A 1343-amino-acid chain; its full sequence is DNA-directed RNA polymerase subunit beta (1343 aa).

Belongs to the RNA polymerase beta chain family. In terms of assembly, the RNAP catalytic core consists of 2 alpha, 1 beta, 1 beta' and 1 omega subunit. When a sigma factor is associated with the core the holoenzyme is formed, which can initiate transcription.

It catalyses the reaction RNA(n) + a ribonucleoside 5'-triphosphate = RNA(n+1) + diphosphate. Its function is as follows. DNA-dependent RNA polymerase catalyzes the transcription of DNA into RNA using the four ribonucleoside triphosphates as substrates. The chain is DNA-directed RNA polymerase subunit beta from Shewanella baltica (strain OS155 / ATCC BAA-1091).